A 551-amino-acid polypeptide reads, in one-letter code: Probable 4-coumarate--CoA ligase 3 (551 aa).

Serine 205, serine 206, glycine 207, threonine 208, threonine 209, and lysine 213 together coordinate ATP. Phenylalanine 253 serves as a coordination point for (E)-4-coumaroyl-AMP. Lysine 274 contacts CoA. Positions 276–346 (EPVRFLELIK…RFKGRLVIKQ (71 aa)) are SBD1. 4 residues coordinate (E)-4-coumaroyl-AMP: alanine 323, glutamine 346, glycine 347, and threonine 351. Positions 346, 347, 351, 430, and 445 each coordinate ATP. The interval 347–409 (GYGATELSPC…IKGPNVMLGY (63 aa)) is SBD2. Positions 447 and 451 each coordinate (E)-4-coumaroyl-AMP. Positions 453 and 454 each coordinate CoA. Lysine 537 serves as a coordination point for ATP.

Belongs to the ATP-dependent AMP-binding enzyme family. It depends on Mg(2+) as a cofactor.

It catalyses the reaction (E)-4-coumarate + ATP + CoA = (E)-4-coumaroyl-CoA + AMP + diphosphate. It carries out the reaction (E)-4-coumarate + ATP + H(+) = (E)-4-coumaroyl-AMP + diphosphate. The enzyme catalyses (E)-4-coumaroyl-AMP + CoA = (E)-4-coumaroyl-CoA + AMP + H(+). It functions in the pathway phytoalexin biosynthesis; 3,4',5-trihydroxystilbene biosynthesis; 3,4',5-trihydroxystilbene from trans-4-coumarate: step 1/2. In terms of biological role, carboxylate--CoA ligase that may use 4-coumarate as substrate. Follows a two-step reaction mechanism, wherein the carboxylate substrate first undergoes adenylation by ATP, followed by a thioesterification in the presence of CoA to yield the final CoA thioester. The polypeptide is Probable 4-coumarate--CoA ligase 3 (4cl3) (Dictyostelium discoideum (Social amoeba)).